Here is a 186-residue protein sequence, read N- to C-terminus: UPF0200 protein Hbut_0338 (186 aa).

13–20 (GMPGSGKS) contributes to the ATP binding site.

Belongs to the UPF0200 family.

The sequence is that of UPF0200 protein Hbut_0338 from Hyperthermus butylicus (strain DSM 5456 / JCM 9403 / PLM1-5).